The sequence spans 328 residues: Malate dehydrogenase (328 aa).

11-17 (GAAGQIG) is a binding site for NAD(+). The substrate site is built by Arg-92 and Arg-98. NAD(+)-binding positions include Asn-105, Gln-112, and 129-131 (TGN). Residues Asn-131 and Arg-162 each contribute to the substrate site. The active-site Proton acceptor is His-187.

This sequence belongs to the LDH/MDH superfamily. MDH type 2 family.

It catalyses the reaction (S)-malate + NAD(+) = oxaloacetate + NADH + H(+). Its function is as follows. Catalyzes the reversible oxidation of malate to oxaloacetate. The sequence is that of Malate dehydrogenase from Paenarthrobacter aurescens (strain TC1).